The following is a 960-amino-acid chain: MFHSSAMVNSHRKPMFNIHRGFYCLTAILPQICICSQFSVPSSYHFTEDPGAFPVATNGERFPWQELRLPSVVIPLHYDLFVHPNLTSLDFVASEKIEVLVSNATQFIILHSKDLEITNATLQSEEDSRYMKPGKELKVLSYPAHEQIALLVPEKLTPHLKYYVAMDFQAKLGDGFEGFYKSTYRTLGGETRILAVTDFEPTQARMAFPCFDEPLFKANFSIKIRRESRHIALSNMPKVKTIELEGGLLEDHFETTVKMSTYLVAYIVCDFHSLSGFTSSGVKVSIYASPDKRNQTHYALQASLKLLDFYEKYFDIYYPLSKLDLIAIPDFAPGAMENWGLITYRETSLLFDPKTSSASDKLWVTRVIAHELAHQWFGNLVTMEWWNDIWLKEGFAKYMELIAVNATYPELQFDDYFLNVCFEVITKDSLNSSRPISKPAETPTQIQEMFDEVSYNKGACILNMLKDFLGEEKFQKGIIQYLKKFSYRNAKNDDLWSSLSNSCLESDFTSGGVCHSDPKMTSNMLAFLGENAEVKEMMTTWTLQKGIPLLVVKQDGCSLRLQQERFLQGVFQEDPEWRALQERYLWHIPLTYSTSSSNVIHRHILKSKTDTLDLPEKTSWVKFNVDSNGYYIVHYEGHGWDQLITQLNQNHTLLRPKDRVGLIHDVFQLVGAGRLTLDKALDMTYYLQHETSSPALLEGLSYLESFYHMMDRRNISDISENLKRYLLQYFKPVIDRQSWSDKGSVWDRMLRSALLKLACDLNHAPCIQKAAELFSQWMESSGKLNIPTDVLKIVYSVGAQTTAGWNYLLEQYELSMSSAEQNKILYALSTSKHQEKLLKLIELGMEGKVIKTQNLAALLHAIARRPKGQQLAWDFVRENWTHLLKKFDLGSYDIRMIISGTTAHFSSKDKLQEVKLFFESLEAQGSHLDIFQTVLETITKNIKWLEKNLPTLRTWLMVNT.

Residues 1-20 (MFHSSAMVNSHRKPMFNIHR) lie on the Cytoplasmic side of the membrane. Residues 21 to 40 (GFYCLTAILPQICICSQFSV) traverse the membrane as a helical; Signal-anchor for type II membrane protein segment. Over 41 to 960 (PSSYHFTEDP…TLRTWLMVNT (920 aa)) the chain is Lumenal. N-linked (GlcNAc...) asparagine glycans are attached at residues asparagine 85 and asparagine 119. Glutamate 200 contributes to the substrate binding site. A glycan (N-linked (GlcNAc...) asparagine) is linked at asparagine 219. 334–338 (GAMEN) serves as a coordination point for substrate. Histidine 370 contacts Zn(2+). Glutamate 371 functions as the Proton acceptor in the catalytic mechanism. Zn(2+)-binding residues include histidine 374 and glutamate 393. An N-linked (GlcNAc...) asparagine glycan is attached at asparagine 405. Cysteines 421 and 460 form a disulfide. N-linked (GlcNAc...) asparagine glycosylation is present at asparagine 650. A disulfide bridge links cysteine 759 with cysteine 766.

It belongs to the peptidase M1 family. In terms of assembly, heterodimer with ERAP1. Zn(2+) serves as cofactor. In terms of processing, N-glycosylated. In terms of tissue distribution, ubiquitously expressed. Highly expressed in spleen and leukocytes.

It is found in the endoplasmic reticulum membrane. Functionally, aminopeptidase that plays a central role in peptide trimming, a step required for the generation of most HLA class I-binding peptides. Peptide trimming is essential to customize longer precursor peptides to fit them to the correct length required for presentation on MHC class I molecules. Preferentially hydrolyzes the basic residues Arg and Lys. This is Endoplasmic reticulum aminopeptidase 2 (ERAP2) from Homo sapiens (Human).